The sequence spans 666 residues: tRNA 5-methylaminomethyl-2-thiouridine biosynthesis bifunctional protein MnmC (666 aa).

The tRNA (mnm(5)s(2)U34)-methyltransferase stretch occupies residues Met-1–Glu-245. The interval Ile-270–Lys-666 is FAD-dependent cmnm(5)s(2)U34 oxidoreductase.

It in the N-terminal section; belongs to the methyltransferase superfamily. tRNA (mnm(5)s(2)U34)-methyltransferase family. In the C-terminal section; belongs to the DAO family. FAD is required as a cofactor.

It localises to the cytoplasm. The enzyme catalyses 5-aminomethyl-2-thiouridine(34) in tRNA + S-adenosyl-L-methionine = 5-methylaminomethyl-2-thiouridine(34) in tRNA + S-adenosyl-L-homocysteine + H(+). In terms of biological role, catalyzes the last two steps in the biosynthesis of 5-methylaminomethyl-2-thiouridine (mnm(5)s(2)U) at the wobble position (U34) in tRNA. Catalyzes the FAD-dependent demodification of cmnm(5)s(2)U34 to nm(5)s(2)U34, followed by the transfer of a methyl group from S-adenosyl-L-methionine to nm(5)s(2)U34, to form mnm(5)s(2)U34. The protein is tRNA 5-methylaminomethyl-2-thiouridine biosynthesis bifunctional protein MnmC of Salmonella typhi.